The chain runs to 162 residues: MLKRYMLLAVATVFFAFQVLTSTATAAELDDATRTVALNEGSTVTLSTQQAKEGQRLFNFACANCHIGGDTKTNPSINLSSASLAGANPRRDNVEGLVDYMNNPTTYDGFDTISEVHPSTQSTDVFPLMRNLSDEDLFDIAGHILIQPSVIGDQWGGGKANR.

Positions 1-26 (MLKRYMLLAVATVFFAFQVLTSTATA) are cleaved as a signal peptide. Heme c contacts are provided by C62, C65, H66, and H117.

Belongs to the cytochrome c family. PsbV subfamily. PSII is composed of 1 copy each of membrane proteins PsbA, PsbB, PsbC, PsbD, PsbE, PsbF, PsbH, PsbI, PsbJ, PsbK, PsbL, PsbM, PsbT, PsbX, PsbY, PsbZ, Psb30/Ycf12, peripheral proteins PsbO, CyanoQ (PsbQ), PsbU, PsbV and a large number of cofactors. It forms dimeric complexes. Heme c is required as a cofactor.

Its subcellular location is the cellular thylakoid membrane. Functionally, one of the extrinsic, lumenal subunits of photosystem II (PSII). PSII is a light-driven water plastoquinone oxidoreductase, using light energy to abstract electrons from H(2)O, generating a proton gradient subsequently used for ATP formation. The extrinsic proteins stabilize the structure of photosystem II oxygen-evolving complex (OEC), the ion environment of oxygen evolution and protect the OEC against heat-induced inactivation. Low-potential cytochrome c that plays a role in the OEC of PSII. The sequence is that of Photosystem II extrinsic protein V from Acaryochloris marina (strain MBIC 11017).